The chain runs to 182 residues: Crossover junction endodeoxyribonuclease RuvC (182 aa).

Active-site residues include Asp-7, Glu-67, and Asp-139. The Mg(2+) site is built by Asp-7, Glu-67, and Asp-139.

It belongs to the RuvC family. As to quaternary structure, homodimer which binds Holliday junction (HJ) DNA. The HJ becomes 2-fold symmetrical on binding to RuvC with unstacked arms; it has a different conformation from HJ DNA in complex with RuvA. In the full resolvosome a probable DNA-RuvA(4)-RuvB(12)-RuvC(2) complex forms which resolves the HJ. The cofactor is Mg(2+).

It is found in the cytoplasm. It carries out the reaction Endonucleolytic cleavage at a junction such as a reciprocal single-stranded crossover between two homologous DNA duplexes (Holliday junction).. The RuvA-RuvB-RuvC complex processes Holliday junction (HJ) DNA during genetic recombination and DNA repair. Endonuclease that resolves HJ intermediates. Cleaves cruciform DNA by making single-stranded nicks across the HJ at symmetrical positions within the homologous arms, yielding a 5'-phosphate and a 3'-hydroxyl group; requires a central core of homology in the junction. The consensus cleavage sequence is 5'-(A/T)TT(C/G)-3'. Cleavage occurs on the 3'-side of the TT dinucleotide at the point of strand exchange. HJ branch migration catalyzed by RuvA-RuvB allows RuvC to scan DNA until it finds its consensus sequence, where it cleaves and resolves the cruciform DNA. The protein is Crossover junction endodeoxyribonuclease RuvC of Bordetella pertussis (strain Tohama I / ATCC BAA-589 / NCTC 13251).